The primary structure comprises 183 residues: Microfibrillar-associated protein 2 (183 aa).

Positions 1-16 (MRAACLFLLFMPGLLA) form a signal peptide, or 18. A Pyrrolidone carboxylic acid modification is found at Gln17. A sulfotyrosine mark is found at Tyr46, Tyr47, and Tyr49. Positions 52 to 92 (VSPRTPEEQFQSQQQVQQEVIPAPTPEPAAAGDLETEPTEP) are disordered. The span at 59–70 (EQFQSQQQVQQE) shows a compositional bias: low complexity. Positions 153-183 (CRDKFSKCGVMAVSGLCQSVAASCARSCGGC) constitute a ShKT domain. Disulfide bonds link Cys153–Cys183, Cys160–Cys176, and Cys169–Cys180.

Belongs to the MFAP family. As to quaternary structure, forms a ternary complex with BGN and ELN. Interacts with FBN1 (via N-terminal domain) and FBN2. Forms intermolecular disulfide bonds either with other MAGP-1 molecules or with other components of the microfibrils. May form transglutaminase cross-links. In terms of processing, O-glycosylated.

The protein localises to the secreted. Its subcellular location is the extracellular space. The protein resides in the extracellular matrix. In terms of biological role, component of the elastin-associated microfibrils. This Mus musculus (Mouse) protein is Microfibrillar-associated protein 2 (Mfap2).